We begin with the raw amino-acid sequence, 253 residues long: Triosephosphate isomerase (253 aa).

Position 13–15 (13–15 (NWK)) interacts with substrate. Residue His100 is the Electrophile of the active site. Glu169 serves as the catalytic Proton acceptor. Substrate contacts are provided by residues Gly175, Ser208, and 229 to 230 (GG).

It belongs to the triosephosphate isomerase family. In terms of assembly, homodimer.

The protein localises to the cytoplasm. The enzyme catalyses D-glyceraldehyde 3-phosphate = dihydroxyacetone phosphate. It functions in the pathway carbohydrate biosynthesis; gluconeogenesis. The protein operates within carbohydrate degradation; glycolysis; D-glyceraldehyde 3-phosphate from glycerone phosphate: step 1/1. Its function is as follows. Involved in the gluconeogenesis. Catalyzes stereospecifically the conversion of dihydroxyacetone phosphate (DHAP) to D-glyceraldehyde-3-phosphate (G3P). In Synechococcus sp. (strain RCC307), this protein is Triosephosphate isomerase.